The primary structure comprises 886 residues: Adhesion G protein-coupled receptor E1 (886 aa).

The signal sequence occupies residues 1–20 (MRGFNLLLFWGCCVMHSWEG). At 21–599 (HIRPTRKPNT…IMASGELTMD (579 aa)) the chain is on the extracellular side. Residues 31-79 (KGNNCRDSTLCPAYATCTNTVDSYYCACKQGFLSSNGQNHFKDPGVRCK) form the EGF-like 1 domain. Intrachain disulfides connect Cys-35/Cys-47, Cys-41/Cys-56, Cys-58/Cys-78, Cys-84/Cys-97, Cys-91/Cys-106, Cys-108/Cys-130, Cys-136/Cys-148, Cys-142/Cys-157, Cys-159/Cys-170, Cys-176/Cys-188, Cys-182/Cys-197, Cys-199/Cys-219, Cys-225/Cys-235, Cys-229/Cys-244, Cys-246/Cys-266, Cys-272/Cys-285, Cys-279/Cys-294, and Cys-296/Cys-315. One can recognise an EGF-like 2; calcium-binding domain in the interval 80–131 (DIDECSQSPQPCGPNSSCKNLSGRYKCSCLDGFSSPTGNDWVPGKPGNFSCT). Asn-94, Asn-99, and Asn-127 each carry an N-linked (GlcNAc...) asparagine glycan. Residues 132 to 171 (DINECLTSSVCPEHSDCVNSMGSYSCSCQVGFISRNSTCE) enclose the EGF-like 3; calcium-binding domain. The N-linked (GlcNAc...) asparagine glycan is linked to Asn-167. An EGF-like 4; calcium-binding domain is found at 172-220 (DVDECADPRACPEHATCNNTVGNYSCFCNPGFESSSGHLSFQGLKASCE). N-linked (GlcNAc...) asparagine glycans are attached at residues Asn-189 and Asn-194. The EGF-like 5; calcium-binding domain maps to 221–267 (DIDECTEMCPINSTCTNTPGSYFCTCHPGFAPSNGQLNFTDQGVECR). N-linked (GlcNAc...) asparagine glycans are attached at residues Asn-232 and Asn-258. In terms of domain architecture, EGF-like 6; calcium-binding spans 268–316 (DIDECRQDPSTCGPNSICTNALGSYSCGCIAGFHPNPEGSQKDGNFSCQ). 4 N-linked (GlcNAc...) asparagine glycosylation sites follow: Asn-312, Asn-366, Asn-375, and Asn-448. Residues 431–597 (EYLDIESKVI…AVIMASGELT (167 aa)) form the GAIN-B domain. 2 cysteine pairs are disulfide-bonded: Cys-550–Cys-579 and Cys-567–Cys-581. The tract at residues 550–597 (CVSWSTDVKGGRWTSFGCVILEASETYTICSCNQMANLAVIMASGELT) is GPS. The helical transmembrane segment at 600–627 (FSLYIISHVGIIISLVCLVLAIATFLLC) threads the bilayer. Residues 628-634 (RSIRNHN) lie on the Cytoplasmic side of the membrane. The chain crosses the membrane as a helical span at residues 635–656 (TYLHLHLCVCLLLAKTLFLAGI). Residues 657 to 666 (HKTDNKMGCA) lie on the Extracellular side of the membrane. The chain crosses the membrane as a helical span at residues 667-690 (IIAGFLHYLFLACFFWMLVEAVIL). The Cytoplasmic segment spans residues 691-709 (FLMVRNLKVVNYFSSRNIK). A helical membrane pass occupies residues 710–731 (MLHICAFGYGLPMLVVVISASV). Residues 732–747 (QPQGYGMHNRCWLNTE) are Extracellular-facing. Residues 748-776 (TGFIWSFLGPVCTVIVINSLLLTWTLWIL) form a helical membrane-spanning segment. The Cytoplasmic portion of the chain corresponds to 777–794 (RQRLSSVNAEVSTLKDTR). A helical membrane pass occupies residues 795–814 (LLTFKAFAQLFILGCSWVLG). Topologically, residues 815–829 (IFQIGPVAGVMAYLF) are extracellular. A helical membrane pass occupies residues 830–852 (TIINSLQGAFIFLIHCLLNGQVR). The Cytoplasmic segment spans residues 853–886 (EEYKRWITGKTKPSSQSQTSRILLSSMPSASKTG). The interval 862-886 (KTKPSSQSQTSRILLSSMPSASKTG) is disordered. Residues 863 to 886 (TKPSSQSQTSRILLSSMPSASKTG) are compositionally biased toward polar residues.

This sequence belongs to the G-protein coupled receptor 2 family. Adhesion G-protein coupled receptor (ADGR) subfamily. Expression is restricted to eosinophils.

The protein resides in the cell membrane. Functionally, orphan receptor involved in cell adhesion and probably in cell-cell interactions specifically involving cells of the immune system. May play a role in regulatory T-cells (Treg) development. The polypeptide is Adhesion G protein-coupled receptor E1 (Homo sapiens (Human)).